A 347-amino-acid chain; its full sequence is GMP reductase (347 aa).

108-131 (ADFQKTKDIMAISDEFIFICIDIA) contacts NADP(+). 2 residues coordinate K(+): G181 and G183. C186 (thioimidate intermediate) is an active-site residue. 216-239 (IIGDGGCSCAGDVAKAFGGGADFV) is a binding site for NADP(+).

It belongs to the IMPDH/GMPR family. GuaC type 1 subfamily. As to quaternary structure, homotetramer.

It carries out the reaction IMP + NH4(+) + NADP(+) = GMP + NADPH + 2 H(+). In terms of biological role, catalyzes the irreversible NADPH-dependent deamination of GMP to IMP. It functions in the conversion of nucleobase, nucleoside and nucleotide derivatives of G to A nucleotides, and in maintaining the intracellular balance of A and G nucleotides. This chain is GMP reductase, found in Vibrio campbellii (strain ATCC BAA-1116).